Here is a 527-residue protein sequence, read N- to C-terminus: Dual specificity protein kinase shkA (527 aa).

The 260-residue stretch at 45–304 folds into the Protein kinase domain; it reads ITTESILGDG…GIVSELEEII (260 aa). ATP is bound by residues 51 to 59 and Lys72; that span reads LGDGSFGTV. Asp167 functions as the Proton acceptor in the catalytic mechanism. The 90-residue stretch at 424-513 folds into the SH2 domain; sequence WFHGDISTSE…INTPCLGSRF (90 aa).

This sequence belongs to the protein kinase superfamily. TKL Ser/Thr protein kinase family. SH2 domain-containing protein kinase subfamily.

The protein resides in the membrane. It catalyses the reaction L-seryl-[protein] + ATP = O-phospho-L-seryl-[protein] + ADP + H(+). The enzyme catalyses L-threonyl-[protein] + ATP = O-phospho-L-threonyl-[protein] + ADP + H(+). Required for proper chemotaxis and phagocytosis; proper spatiotemporal control of F-actin levels in chemotaxing cells. Negative regulator of the PI3K (phosphatidylinositol 3 kinase) pathway. Predominantly phosphorylates serines and threonines and tyrosines at a lower level. In Dictyostelium discoideum (Social amoeba), this protein is Dual specificity protein kinase shkA (shkA).